We begin with the raw amino-acid sequence, 608 residues long: Threonine--tRNA ligase (608 aa).

Residues 1 to 143 (MRVLYIHAER…VFKPEEAKTE (143 aa)) are editing domain. Catalytic regions lie at residues 194–490 (PKYL…PRLP) and 195–490 (KYLD…PRLP). Positions 287, 338, and 459 each coordinate Zn(2+).

It belongs to the class-II aminoacyl-tRNA synthetase family. In terms of assembly, homodimer. The cofactor is Zn(2+).

The protein localises to the cytoplasm. The enzyme catalyses tRNA(Thr) + L-threonine + ATP = L-threonyl-tRNA(Thr) + AMP + diphosphate + H(+). In terms of biological role, catalyzes the attachment of threonine to tRNA(Thr) in a two-step reaction: L-threonine is first activated by ATP to form Thr-AMP and then transferred to the acceptor end of tRNA(Thr). Also edits incorrectly charged L-seryl-tRNA(Thr). The protein is Threonine--tRNA ligase of Pyrobaculum arsenaticum (strain DSM 13514 / JCM 11321 / PZ6).